A 465-amino-acid chain; its full sequence is Asparagine--tRNA ligase (465 aa).

The protein belongs to the class-II aminoacyl-tRNA synthetase family. As to quaternary structure, homodimer.

The protein resides in the cytoplasm. The catalysed reaction is tRNA(Asn) + L-asparagine + ATP = L-asparaginyl-tRNA(Asn) + AMP + diphosphate + H(+). This chain is Asparagine--tRNA ligase, found in Pseudoalteromonas atlantica (strain T6c / ATCC BAA-1087).